We begin with the raw amino-acid sequence, 96 residues long: Large ribosomal subunit protein bL21 (96 aa).

It belongs to the bacterial ribosomal protein bL21 family. Part of the 50S ribosomal subunit. Contacts protein L20.

This protein binds to 23S rRNA in the presence of protein L20. The sequence is that of Large ribosomal subunit protein bL21 from Hydrogenobaculum sp. (strain Y04AAS1).